We begin with the raw amino-acid sequence, 148 residues long: Cytochrome c oxidase subunit 6, mitochondrial (148 aa).

The transit peptide at 1–40 directs the protein to the mitochondrion; it reads MASFFRTAVRGPSAGLFRAVARPQPIAARVSLFSTSSRFR.

It belongs to the cytochrome c oxidase subunit 5A family. As to quaternary structure, component of the cytochrome c oxidase (complex IV, CIV), a multisubunit enzyme composed of 11 subunits. The complex is composed of a catalytic core of 3 subunits Cox1, Cox2 and Cox3, encoded in the mitochondrial DNA, and 8 supernumerary subunits Cox4, Cox5a/Cox5, Cox6, Cox7, Cox8, Cox7a/Cox9, Cox6b/Cox12 and Cox6a/Cox13, which are encoded in the nuclear genome. The complex exists as a monomer or a dimer and forms respiratory supercomplexes (SCs) in the inner mitochondrial membrane with NADH-ubiquinone oxidoreductase (complex I, CI) and ubiquinol-cytochrome c oxidoreductase (cytochrome b-c1 complex, complex III, CIII), resulting in various different assemblies (supercomplexes I(1)IV(1), I(1)III(3)IV(2), III(2)IV(1) and III(2)IV(2) as well as larger supercomplexes of compositions like I(1)III(2)IV(5-6)).

Its subcellular location is the mitochondrion inner membrane. It participates in energy metabolism; oxidative phosphorylation. Functionally, component of the cytochrome c oxidase, the last enzyme in the mitochondrial electron transport chain which drives oxidative phosphorylation. The respiratory chain contains 3 multisubunit complexes succinate dehydrogenase (complex II, CII), ubiquinol-cytochrome c oxidoreductase (cytochrome b-c1 complex, complex III, CIII) and cytochrome c oxidase (complex IV, CIV), that cooperate to transfer electrons derived from NADH and succinate to molecular oxygen, creating an electrochemical gradient over the inner membrane that drives transmembrane transport and the ATP synthase. Cytochrome c oxidase is the component of the respiratory chain that catalyzes the reduction of oxygen to water. Electrons originating from reduced cytochrome c in the intermembrane space (IMS) are transferred via the dinuclear copper A center (CU(A)) of Cox2 and heme A of Cox1 to the active site in Cox1, a binuclear center (BNC) formed by heme A3 and copper B (CU(B)). The BNC reduces molecular oxygen to 2 water molecules using 4 electrons from cytochrome c in the IMS and 4 protons from the mitochondrial matrix. The chain is Cytochrome c oxidase subunit 6, mitochondrial (cox-6) from Neurospora crassa (strain ATCC 24698 / 74-OR23-1A / CBS 708.71 / DSM 1257 / FGSC 987).